The sequence spans 229 residues: Ribonuclease 3 (229 aa).

The RNase III domain occupies 5–127 (LARLERKLGY…LIGAIYLDAD (123 aa)). Glutamate 40 serves as a coordination point for Mg(2+). Residue aspartate 44 is part of the active site. Residues aspartate 113 and glutamate 116 each contribute to the Mg(2+) site. Glutamate 116 is an active-site residue. A DRBM domain is found at 154 to 224 (DPKTRLQEFL…AAAALIALGV (71 aa)).

This sequence belongs to the ribonuclease III family. Homodimer. Requires Mg(2+) as cofactor.

It localises to the cytoplasm. It catalyses the reaction Endonucleolytic cleavage to 5'-phosphomonoester.. Digests double-stranded RNA. Involved in the processing of primary rRNA transcript to yield the immediate precursors to the large and small rRNAs (23S and 16S). Processes some mRNAs, and tRNAs when they are encoded in the rRNA operon. Processes pre-crRNA and tracrRNA of type II CRISPR loci if present in the organism. The chain is Ribonuclease 3 from Pseudomonas putida (strain W619).